The primary structure comprises 351 residues: Ferredoxin--NADP reductase (351 aa).

FAD is bound by residues Thr-14, Asp-33, Gln-41, Tyr-46, Ala-86, Phe-121, Asp-287, and Thr-328.

This sequence belongs to the ferredoxin--NADP reductase type 2 family. Homodimer. It depends on FAD as a cofactor.

It carries out the reaction 2 reduced [2Fe-2S]-[ferredoxin] + NADP(+) + H(+) = 2 oxidized [2Fe-2S]-[ferredoxin] + NADPH. The sequence is that of Ferredoxin--NADP reductase from Flavobacterium psychrophilum (strain ATCC 49511 / DSM 21280 / CIP 103535 / JIP02/86).